The primary structure comprises 124 residues: MTSSAAAAIKQALGAYGETLAARHLVGQGMVLLERNWRCEAGEIDLVLRDGDVLVVCEVKTRSSLRYGTPHEAVTDIKVARLRRLASRWVQDRGVAVRDIRIDLVGIVRPRRGSSVVDHVRGIG.

It belongs to the UPF0102 family.

The sequence is that of UPF0102 protein Noca_3248 from Nocardioides sp. (strain ATCC BAA-499 / JS614).